The primary structure comprises 435 residues: Gamma-glutamyl phosphate reductase (435 aa).

The protein belongs to the gamma-glutamyl phosphate reductase family.

Its subcellular location is the cytoplasm. The enzyme catalyses L-glutamate 5-semialdehyde + phosphate + NADP(+) = L-glutamyl 5-phosphate + NADPH + H(+). It functions in the pathway amino-acid biosynthesis; L-proline biosynthesis; L-glutamate 5-semialdehyde from L-glutamate: step 2/2. Catalyzes the NADPH-dependent reduction of L-glutamate 5-phosphate into L-glutamate 5-semialdehyde and phosphate. The product spontaneously undergoes cyclization to form 1-pyrroline-5-carboxylate. This is Gamma-glutamyl phosphate reductase from Parasynechococcus marenigrum (strain WH8102).